Here is a 1185-residue protein sequence, read N- to C-terminus: DNA-directed RNA polymerase subunit beta' (1185 aa).

Residues Cys-60, Cys-62, Cys-75, and Cys-78 each contribute to the Zn(2+) site. Mg(2+) is bound by residues Asp-449, Asp-451, and Asp-453. Zn(2+) is bound by residues Cys-774, Cys-853, Cys-860, and Cys-863.

It belongs to the RNA polymerase beta' chain family. As to quaternary structure, the RNAP catalytic core consists of 2 alpha, 1 beta, 1 beta' and 1 omega subunit. When a sigma factor is associated with the core the holoenzyme is formed, which can initiate transcription. Mg(2+) is required as a cofactor. Requires Zn(2+) as cofactor.

It catalyses the reaction RNA(n) + a ribonucleoside 5'-triphosphate = RNA(n+1) + diphosphate. Functionally, DNA-dependent RNA polymerase catalyzes the transcription of DNA into RNA using the four ribonucleoside triphosphates as substrates. The protein is DNA-directed RNA polymerase subunit beta' of Desulforamulus reducens (strain ATCC BAA-1160 / DSM 100696 / MI-1) (Desulfotomaculum reducens).